A 547-amino-acid chain; its full sequence is ATP synthase subunit alpha (547 aa).

172-179 is a binding site for ATP; sequence GDRKTGKT.

Belongs to the ATPase alpha/beta chains family. In terms of assembly, F-type ATPases have 2 components, CF(1) - the catalytic core - and CF(0) - the membrane proton channel. CF(1) has five subunits: alpha(3), beta(3), gamma(1), delta(1), epsilon(1). CF(0) has three main subunits: a(1), b(2) and c(9-12). The alpha and beta chains form an alternating ring which encloses part of the gamma chain. CF(1) is attached to CF(0) by a central stalk formed by the gamma and epsilon chains, while a peripheral stalk is formed by the delta and b chains.

The protein localises to the cell membrane. It catalyses the reaction ATP + H2O + 4 H(+)(in) = ADP + phosphate + 5 H(+)(out). Its function is as follows. Produces ATP from ADP in the presence of a proton gradient across the membrane. The alpha chain is a regulatory subunit. The protein is ATP synthase subunit alpha of Rhodococcus erythropolis (strain PR4 / NBRC 100887).